The chain runs to 659 residues: L-type lectin-domain containing receptor kinase V.7 (659 aa).

An N-terminal signal peptide occupies residues M1–G25. A legume-lectin like region spans residues N22 to S244. Residues N26 to R275 lie on the Extracellular side of the membrane. N-linked (GlcNAc...) asparagine glycans are attached at residues N45, N64, N110, and N192. Residues I276 to F296 form a helical membrane-spanning segment. The Cytoplasmic segment spans residues V297 to R659. The Protein kinase domain occupies F333–L595. ATP is bound by residues L339–V347 and K362. D462 acts as the Proton acceptor in catalysis.

In the C-terminal section; belongs to the protein kinase superfamily. Ser/Thr protein kinase family. It in the N-terminal section; belongs to the leguminous lectin family.

The protein localises to the cell membrane. It carries out the reaction L-seryl-[protein] + ATP = O-phospho-L-seryl-[protein] + ADP + H(+). The enzyme catalyses L-threonyl-[protein] + ATP = O-phospho-L-threonyl-[protein] + ADP + H(+). In terms of biological role, involved in resistance response to the pathogenic oomycetes Phytophthora infestans and Phytophthora capsici and to the pathogenic bacteria Pseudomonas syringae. The protein is L-type lectin-domain containing receptor kinase V.7 of Arabidopsis thaliana (Mouse-ear cress).